Consider the following 89-residue polypeptide: Cell division topological specificity factor (89 aa).

It belongs to the MinE family.

In terms of biological role, prevents the cell division inhibition by proteins MinC and MinD at internal division sites while permitting inhibition at polar sites. This ensures cell division at the proper site by restricting the formation of a division septum at the midpoint of the long axis of the cell. In Brucella anthropi (strain ATCC 49188 / DSM 6882 / CCUG 24695 / JCM 21032 / LMG 3331 / NBRC 15819 / NCTC 12168 / Alc 37) (Ochrobactrum anthropi), this protein is Cell division topological specificity factor.